We begin with the raw amino-acid sequence, 320 residues long: Phosphatidylserine decarboxylase proenzyme (320 aa).

Catalysis depends on charge relay system; for autoendoproteolytic cleavage activity residues aspartate 90, histidine 147, and serine 254. Serine 254 functions as the Schiff-base intermediate with substrate; via pyruvic acid; for decarboxylase activity in the catalytic mechanism. Serine 254 carries the post-translational modification Pyruvic acid (Ser); by autocatalysis. Residues threonine 290–glycine 320 are disordered. The span at glutamate 301–glycine 320 shows a compositional bias: basic and acidic residues.

Belongs to the phosphatidylserine decarboxylase family. PSD-B subfamily. Prokaryotic type I sub-subfamily. In terms of assembly, heterodimer of a large membrane-associated beta subunit and a small pyruvoyl-containing alpha subunit. The cofactor is pyruvate. Is synthesized initially as an inactive proenzyme. Formation of the active enzyme involves a self-maturation process in which the active site pyruvoyl group is generated from an internal serine residue via an autocatalytic post-translational modification. Two non-identical subunits are generated from the proenzyme in this reaction, and the pyruvate is formed at the N-terminus of the alpha chain, which is derived from the carboxyl end of the proenzyme. The autoendoproteolytic cleavage occurs by a canonical serine protease mechanism, in which the side chain hydroxyl group of the serine supplies its oxygen atom to form the C-terminus of the beta chain, while the remainder of the serine residue undergoes an oxidative deamination to produce ammonia and the pyruvoyl prosthetic group on the alpha chain. During this reaction, the Ser that is part of the protease active site of the proenzyme becomes the pyruvoyl prosthetic group, which constitutes an essential element of the active site of the mature decarboxylase.

It localises to the cell membrane. It carries out the reaction a 1,2-diacyl-sn-glycero-3-phospho-L-serine + H(+) = a 1,2-diacyl-sn-glycero-3-phosphoethanolamine + CO2. Its pathway is phospholipid metabolism; phosphatidylethanolamine biosynthesis; phosphatidylethanolamine from CDP-diacylglycerol: step 2/2. Functionally, catalyzes the formation of phosphatidylethanolamine (PtdEtn) from phosphatidylserine (PtdSer). In Klebsiella pneumoniae subsp. pneumoniae (strain ATCC 700721 / MGH 78578), this protein is Phosphatidylserine decarboxylase proenzyme.